The primary structure comprises 1520 residues: Integrator complex subunit 3 homolog (1520 aa).

Disordered regions lie at residues 1–23 (MMNQ…QQLT), 523–671 (QLHS…NSRV), 689–801 (VISQ…SPST), 813–922 (DEPP…QNIK), 1116–1177 (FSNS…NITN), and 1489–1520 (QSSN…FRKE). 2 stretches are compositionally biased toward low complexity: residues 527–549 (QQQQ…QQPP) and 557–595 (QPIN…QQQP). Over residues 596–612 (PQQPPPQQQPQQQPPQQ) the composition is skewed to pro residues. Residues 613–625 (QPQQQPQQQQPQL) show a composition bias toward low complexity. A compositionally biased stretch (polar residues) spans 626–639 (NISTGNLPNIQQPM). Composition is skewed to low complexity over residues 642-669 (SPPL…TNNS), 694-717 (PQSQ…SPPL), and 725-735 (QQQPSQQLPSQ). The span at 736 to 752 (IVKNSPPNLSMTNENIS) shows a compositional bias: polar residues. Positions 768 to 789 (SPLINSSNSNITTPNPDSQSQI) are enriched in low complexity. Residues 819 to 828 (SKSSPTQSNI) are compositionally biased toward polar residues. Over residues 837 to 882 (PPQTTISSSSPLLQPQTQPQPQTQPQPQTLQQSTTPSLSSSSTPTI) the composition is skewed to low complexity. Over residues 898–918 (QPPPPPPSSQPLQPPPPPPPS) the composition is skewed to pro residues. Composition is skewed to low complexity over residues 1116 to 1130 (FSNS…NNNN) and 1137 to 1177 (QQQQ…NITN). Positions 1489–1504 (QSSNIKNDNNPTLSKH) are enriched in polar residues.

This sequence belongs to the Integrator subunit 3 family. Component of the Integrator complex. The core complex associates with protein phosphatase 2A subunits, to form the Integrator-PP2A (INTAC) complex. Component of the SOSS complex.

The protein resides in the nucleus. Its subcellular location is the cytoplasm. Its function is as follows. Component of the integrator complex, a multiprotein complex that terminates RNA polymerase II (Pol II) transcription in the promoter-proximal region of genes. The integrator complex provides a quality checkpoint during transcription elongation by driving premature transcription termination of transcripts that are unfavorably configured for transcriptional elongation: the complex terminates transcription by (1) catalyzing dephosphorylation of the C-terminal domain (CTD) of Pol II subunit polr2a, (2) degrading the exiting nascent RNA transcript via endonuclease activity and (3) promoting the release of Pol II from bound DNA. The integrator complex is also involved in terminating the synthesis of non-coding Pol II transcripts, such as enhancer RNAs (eRNAs), small nuclear RNAs (snRNAs), telomerase RNAs and long non-coding RNAs (lncRNAs). Component of the SOSS complex, a multiprotein complex that functions downstream of the MRN complex to promote DNA repair and G2/M checkpoint. The SOSS complex associates with single-stranded DNA at DNA lesions and influences diverse endpoints in the cellular DNA damage response including cell-cycle checkpoint activation, recombinational repair and maintenance of genomic stability. The SOSS complex is required for efficient homologous recombination-dependent repair of double-strand breaks (DSBs) and ATM-dependent signaling pathways. In the SOSS complex, it is required for the assembly of the complex and for stabilization of the complex at DNA damage sites. The polypeptide is Integrator complex subunit 3 homolog (ints3) (Dictyostelium discoideum (Social amoeba)).